We begin with the raw amino-acid sequence, 76 residues long: UPF0291 protein GWCH70_1239 (76 aa).

The tract at residues 54–76 (VIDPNGNDVTPKKLKESQKSRLH) is disordered. Residues 63–76 (TPKKLKESQKSRLH) are compositionally biased toward basic and acidic residues.

The protein belongs to the UPF0291 family.

The protein resides in the cytoplasm. This Geobacillus sp. (strain WCH70) protein is UPF0291 protein GWCH70_1239.